Here is a 181-residue protein sequence, read N- to C-terminus: Adenine phosphoribosyltransferase 2 (181 aa).

The residue at position 2 (Ser-2) is an N-acetylserine.

The protein belongs to the purine/pyrimidine phosphoribosyltransferase family.

It is found in the cytoplasm. It catalyses the reaction AMP + diphosphate = 5-phospho-alpha-D-ribose 1-diphosphate + adenine. Its pathway is purine metabolism; AMP biosynthesis via salvage pathway; AMP from adenine: step 1/1. Functionally, catalyzes a salvage reaction resulting in the formation of AMP, that is energically less costly than de novo synthesis. May lack catalytic activity. This Saccharomyces cerevisiae (strain ATCC 204508 / S288c) (Baker's yeast) protein is Adenine phosphoribosyltransferase 2 (APT2).